The sequence spans 770 residues: MFPQSRHPTPHQAAGQPFKFTIPESLDRIKEEFQFLQAQYHSLKLECEKLASEKTEMQRHYVMYYEMSYGLNIEMHKQTEIAKRLNTICAQVIPFLSQEHQQQVAQAVERAKQVTMAELNAIIGQQQLQAQHLSHGHGPPVPLTPHPSGLQPPGIPPLGGSASLLALSSALSGQSHLAIKDDKKHHDAERHRDRESGTSNSLLVPDSLRSTDKRRNGPEFSSDIKKRKVDDKDNYDSDGDKSDDNLVVDVSNEDPSSPHASPTHSPRENGIDKNRLLKKDASGSPASTASSGSSSSLKSKEVSLHEKANTPVLKSSTPTPRSDMPTPGTSATPGLRPGLGKPPAMEPLVNQAAAGLRTPLAVPGPYPAPFGMVPHAGMNGELTSPGAAYAGLHSMSPQMSAAAAAAAAAVVAYGRSPMVGFDPPPHMRVPSIPPNLAGIPGGKPAYSFHVTADGQMQPVPFPPDALIGPGIPRHARQINTLNHGEVVCAVTISNPTRHVYTGGKGCVKVWDISHPGNKSPVSQLDCLNRDNYIRSCKLLPDGCTLIVGGEASTLSIWDLAAPTPRIKAELTSSAPACYALAISPDSKVCFSCCSDGNIAVWDLHNQTLVRQFQGHTDGASCIDISNDGTKLWTGGLDNTVRSWDLREGRQLQQHDFTSQIFSLGYCPTGEWLAVGMESSNVEVLHVNKPDKYQLHLHESCVLSLKFAYCGKWFVSTGKDNLLNAWRTPYGASIFQSKESSSVLSCDISVDDKYIVTGSGDKKATVYEVIY.

The q domain stretch occupies residues 1 to 131 (MFPQSRHPTP…IIGQQQLQAQ (131 aa)). Disordered stretches follow at residues 128 to 157 (LQAQ…GIPP) and 176 to 346 (HLAI…PAME). Positions 132–199 (HLSHGHGPPV…RHRDRESGTS (68 aa)) are GP domain. Residues 146-157 (HPSGLQPPGIPP) show a composition bias toward low complexity. Basic and acidic residues-rich tracts occupy residues 178-196 (AIKD…DRES) and 209-244 (RSTD…KSDD). Positions 200-266 (NSLLVPDSLR…SPHASPTHSP (67 aa)) are ccN domain. The Nuclear localization signal signature appears at 225-228 (KKRK). Residue S237 is modified to Phosphoserine; by CK2. A compositionally biased stretch (low complexity) spans 255–264 (PSSPHASPTH). A phosphoserine; by CDK1 mark is found at S257, S261, and S265. Residues 265–281 (SPRENGIDKNRLLKKDA) are compositionally biased toward basic and acidic residues. The SP domain stretch occupies residues 267 to 450 (RENGIDKNRL…GGKPAYSFHV (184 aa)). Over residues 282 to 297 (SGSPASTASSGSSSSL) the composition is skewed to low complexity. Residue S284 is modified to Phosphoserine. Positions 298–308 (KSKEVSLHEKA) are enriched in basic and acidic residues. WD repeat units follow at residues 470-501 (GIPR…HVYT), 528-558 (NRDN…SIWD), 572-602 (SSAP…AVWD), 614-644 (GHTD…RSWD), 696-726 (LHES…NAWR), and 737-767 (KESS…TVYE).

Belongs to the WD repeat Groucho/TLE family. In terms of assembly, homooligomer and heterooligomer with other family members. Binds RUNX1, RUNX3, FOXA2, KDM6A, UTY, histone H3, HESX1, ESRRG and the NF-kappa-B subunit RELA. Interacts with HES1 (via WRPW motif). Binds TCF7, LEF1, TCF7L1 and TCF7L2. Interacts with SIX3. Interacts with EFNB1. Interacts with TLE4. Interacts with FOXG1/BF-1; the interaction is inhibited by TLE6/GRG6. Post-translationally, phosphorylated, probably by CDK1. The degree of phosphorylation varies throughout the cell cycle, and is highest at the G2/M transition. Becomes hyperphosphorylated in response to cell differentiation and interaction with HES1 or RUNX1. In terms of processing, ubiquitinated by XIAP/BIRC4. Highly expressed in liver and lung. Detected at slightly lower levels in heart, brain, kidney and testis. Detected in fetal and adult stomach and small intestine, in adult ileum, duodenum and colon. Expressed in bone marrow-derived macrophages. In terms of tissue distribution, most abundant at the base of the crypts of Lieberkuhn in the small intestine.

Its subcellular location is the nucleus. The protein localises to the cytoplasm. Transcriptional corepressor that binds to a number of transcription factors. Inhibits NF-kappa-B-regulated gene expression. Inhibits the transcriptional activation mediated by FOXA2, and by CTNNB1 and TCF family members in Wnt signaling. Enhances FOXG1/BF-1- and HES1-mediated transcriptional repression. The effects of full-length TLE family members may be modulated by association with dominant-negative AES. Unusual function as coactivator for ESRRG. In Mus musculus (Mouse), this protein is Transducin-like enhancer protein 1 (Tle1).